The following is a 51-amino-acid chain: Ribosomal protein eL39-like 2 (51 aa).

Belongs to the eukaryotic ribosomal protein eL39 family. In terms of assembly, component of a male germ cell-specific 60S large ribosomal subunit (LSU), which contains RPL10L and RPL39L, instead of RPL10 and RPL39 paralogs. The composition of the rest of the complex is similar to classical ribosomes. As to expression, testis specific.

It is found in the cytoplasm. In terms of biological role, male germ cell-specific component of the ribosome, which is required for the formation of sperm and male fertility. Replaces the RPL39 paralog in the ribosome of male germ cells. The ribosome is a large ribonucleoprotein complex responsible for the synthesis of proteins in the cell. The male germ cell-specific ribosome displays a ribosomal polypeptide exit tunnel of distinct size and charge states compared with the classical ribosome. It is responsible for regulating the biosynthesis and folding of a subset of male germ-cell-specific proteins that are essential for the formation of sperm. This Homo sapiens (Human) protein is Ribosomal protein eL39-like 2.